We begin with the raw amino-acid sequence, 2130 residues long: Dedicator of cytokinesis protein 7 (2130 aa).

Ser-30 carries the post-translational modification Phosphoserine. Residues 137 to 175 form a disordered region; that stretch reads GFNPNTLDKQKERQKGLPRQVFESDEAPDGSSYQDEQDD. Phosphoserine occurs at positions 180 and 182. Positions 365–395 form a coiled coil; that stretch reads FKEADATKNKEKLEKLKSQADQFCQRLGKYR. Position 381 is an N6-methyllysine (Lys-381). The residue at position 450 (Thr-450) is a Phosphothreonine. Phosphoserine is present on Ser-452. Residues 561–727 form the C2 DOCK-type domain; that stretch reads RNLLYIYPQS…GVFNVEVVAV (167 aa). Ser-862, Ser-864, Ser-882, Ser-888, Ser-896, Ser-900, and Ser-905 each carry phosphoserine. Residues 888-901 show a composition bias toward low complexity; that stretch reads SLNLNRSRSLSNSN. The disordered stretch occupies residues 888 to 966; sequence SLNLNRSRSL…SCNRMSSHTE (79 aa). A phosphothreonine mark is found at Thr-907 and Thr-909. A phosphoserine mark is found at Ser-910, Ser-929, Ser-963, Ser-1382, Ser-1420, Ser-1422, Ser-1424, and Ser-1428. A compositionally biased stretch (polar residues) spans 942 to 966; the sequence is SNPSPSAESTQAMDRSCNRMSSHTE. One can recognise a DOCKER domain in the interval 1668 to 2104; it reads KGYQTSPDLR…LQPLINRKIP (437 aa). An N6-acetyllysine modification is found at Lys-1952. Residues 2076–2102 adopt a coiled-coil conformation; that stretch reads DQKEYQRELERNYHRLKEALQPLINRK. The residue at position 2119 (Ser-2119) is a Phosphoserine.

It belongs to the DOCK family. As to quaternary structure, component of the DOCK7-induced septin displacement/DISP complex, at least composed of DOCK7, LRCH3 and MYO6. Interacts with TSC1. Interacts with nucleotide-free RAC1 and RAC3. Interacts with TACC3. Interacts with CRY1. Interacts with NOD2.

The protein resides in the cell projection. It localises to the axon. Functions as a guanine nucleotide exchange factor (GEF), which activates Rac1 and Rac3 Rho small GTPases by exchanging bound GDP for free GTP. Does not have a GEF activity for CDC42. Required for STMN1 'Ser-15' phosphorylation during axon formation and consequently for neuronal polarization. As part of the DISP complex, may regulate the association of septins with actin and thereby regulate the actin cytoskeleton. Has a role in pigmentation. Involved in the regulation of cortical neurogenesis through the control of radial glial cells (RGCs) proliferation versus differentiation; negatively regulates the basal-to-apical interkinetic nuclear migration of RGCs by antagonizing the microtubule growth-promoting function of TACC3. The polypeptide is Dedicator of cytokinesis protein 7 (Dock7) (Mus musculus (Mouse)).